The primary structure comprises 248 residues: 3-deoxy-manno-octulosonate cytidylyltransferase (248 aa).

It belongs to the KdsB family.

It is found in the cytoplasm. The enzyme catalyses 3-deoxy-alpha-D-manno-oct-2-ulosonate + CTP = CMP-3-deoxy-beta-D-manno-octulosonate + diphosphate. It functions in the pathway nucleotide-sugar biosynthesis; CMP-3-deoxy-D-manno-octulosonate biosynthesis; CMP-3-deoxy-D-manno-octulosonate from 3-deoxy-D-manno-octulosonate and CTP: step 1/1. The protein operates within bacterial outer membrane biogenesis; lipopolysaccharide biosynthesis. Activates KDO (a required 8-carbon sugar) for incorporation into bacterial lipopolysaccharide in Gram-negative bacteria. This Shigella boydii serotype 18 (strain CDC 3083-94 / BS512) protein is 3-deoxy-manno-octulosonate cytidylyltransferase.